The primary structure comprises 423 residues: UDP-N-acetylglucosamine 1-carboxyvinyltransferase 2 (423 aa).

Residue 23-24 (KN) participates in phosphoenolpyruvate binding. R93 contributes to the UDP-N-acetyl-alpha-D-glucosamine binding site. The Proton donor role is filled by C117. At C117 the chain carries 2-(S-cysteinyl)pyruvic acid O-phosphothioketal. UDP-N-acetyl-alpha-D-glucosamine is bound by residues 122 to 126 (RPIDQ), D305, and I327.

Belongs to the EPSP synthase family. MurA subfamily.

It is found in the cytoplasm. The enzyme catalyses phosphoenolpyruvate + UDP-N-acetyl-alpha-D-glucosamine = UDP-N-acetyl-3-O-(1-carboxyvinyl)-alpha-D-glucosamine + phosphate. It functions in the pathway cell wall biogenesis; peptidoglycan biosynthesis. Its function is as follows. Cell wall formation. Adds enolpyruvyl to UDP-N-acetylglucosamine. The polypeptide is UDP-N-acetylglucosamine 1-carboxyvinyltransferase 2 (Listeria monocytogenes serovar 1/2a (strain ATCC BAA-679 / EGD-e)).